We begin with the raw amino-acid sequence, 111 residues long: Iron-sulfur cluster insertion protein ErpA (111 aa).

Cys39, Cys103, and Cys105 together coordinate iron-sulfur cluster.

The protein belongs to the HesB/IscA family. Homodimer. Requires iron-sulfur cluster as cofactor.

In terms of biological role, required for insertion of 4Fe-4S clusters for at least IspG. This Buchnera aphidicola subsp. Cinara cedri (strain Cc) protein is Iron-sulfur cluster insertion protein ErpA.